The chain runs to 396 residues: S-adenosylmethionine synthase (396 aa).

His16 lines the ATP pocket. Position 18 (Asp18) interacts with Mg(2+). Glu44 provides a ligand contact to K(+). Positions 57 and 100 each coordinate L-methionine. The tract at residues 100–110 (QSVDINQGVDR) is flexible loop. Residues 165–167 (DAK), Asp240, 246–247 (RK), Ala263, and Lys267 each bind ATP. Position 240 (Asp240) interacts with L-methionine. Lys271 serves as a coordination point for L-methionine.

Belongs to the AdoMet synthase family. As to quaternary structure, homotetramer; dimer of dimers. It depends on Mg(2+) as a cofactor. K(+) is required as a cofactor.

It localises to the cytoplasm. It carries out the reaction L-methionine + ATP + H2O = S-adenosyl-L-methionine + phosphate + diphosphate. Its pathway is amino-acid biosynthesis; S-adenosyl-L-methionine biosynthesis; S-adenosyl-L-methionine from L-methionine: step 1/1. Functionally, catalyzes the formation of S-adenosylmethionine (AdoMet) from methionine and ATP. The overall synthetic reaction is composed of two sequential steps, AdoMet formation and the subsequent tripolyphosphate hydrolysis which occurs prior to release of AdoMet from the enzyme. In Pseudomonas aeruginosa (strain UCBPP-PA14), this protein is S-adenosylmethionine synthase.